The chain runs to 300 residues: tRNA pseudouridine synthase A (300 aa).

Aspartate 67 (nucleophile) is an active-site residue. Tyrosine 125 contacts substrate.

This sequence belongs to the tRNA pseudouridine synthase TruA family. In terms of assembly, homodimer.

It catalyses the reaction uridine(38/39/40) in tRNA = pseudouridine(38/39/40) in tRNA. Formation of pseudouridine at positions 38, 39 and 40 in the anticodon stem and loop of transfer RNAs. This Synechococcus sp. (strain CC9902) protein is tRNA pseudouridine synthase A.